Reading from the N-terminus, the 113-residue chain is UPF0122 protein Sez_1013 (113 aa).

It belongs to the UPF0122 family.

Might take part in the signal recognition particle (SRP) pathway. This is inferred from the conservation of its genetic proximity to ftsY/ffh. May be a regulatory protein. This is UPF0122 protein Sez_1013 from Streptococcus equi subsp. zooepidemicus (strain MGCS10565).